The following is a 346-amino-acid chain: Glycerol-3-phosphate dehydrogenase [NAD(P)+] (346 aa).

NADPH contacts are provided by serine 15, tryptophan 16, arginine 36, and lysine 110. Positions 110, 139, and 141 each coordinate sn-glycerol 3-phosphate. Alanine 143 is a binding site for NADPH. The sn-glycerol 3-phosphate site is built by lysine 194, aspartate 247, serine 257, arginine 258, and asparagine 259. Lysine 194 (proton acceptor) is an active-site residue. An NADPH-binding site is contributed by arginine 258. Residues valine 282 and glutamate 284 each coordinate NADPH.

The protein belongs to the NAD-dependent glycerol-3-phosphate dehydrogenase family.

Its subcellular location is the cytoplasm. It catalyses the reaction sn-glycerol 3-phosphate + NAD(+) = dihydroxyacetone phosphate + NADH + H(+). It carries out the reaction sn-glycerol 3-phosphate + NADP(+) = dihydroxyacetone phosphate + NADPH + H(+). It functions in the pathway membrane lipid metabolism; glycerophospholipid metabolism. Catalyzes the reduction of the glycolytic intermediate dihydroxyacetone phosphate (DHAP) to sn-glycerol 3-phosphate (G3P), the key precursor for phospholipid synthesis. The polypeptide is Glycerol-3-phosphate dehydrogenase [NAD(P)+] (Xylella fastidiosa (strain M23)).